The sequence spans 338 residues: Glyceraldehyde-3-phosphate dehydrogenase (338 aa).

NAD(+) contacts are provided by residues 12-13 (RI), Asp34, and Arg80. D-glyceraldehyde 3-phosphate contacts are provided by residues 151-153 (SCT), Thr182, 211-212 (TG), and Arg234. Cys152 functions as the Nucleophile in the catalytic mechanism. Residue Asn316 coordinates NAD(+).

Belongs to the glyceraldehyde-3-phosphate dehydrogenase family. In terms of assembly, homotetramer.

It is found in the cytoplasm. The catalysed reaction is D-glyceraldehyde 3-phosphate + phosphate + NAD(+) = (2R)-3-phospho-glyceroyl phosphate + NADH + H(+). Its pathway is carbohydrate degradation; glycolysis; pyruvate from D-glyceraldehyde 3-phosphate: step 1/5. This is Glyceraldehyde-3-phosphate dehydrogenase (GPD) from Paracoccidioides lutzii (strain ATCC MYA-826 / Pb01) (Paracoccidioides brasiliensis).